We begin with the raw amino-acid sequence, 258 residues long: Gamma-secretase subunit Aph-1b (258 aa).

The next 7 helical transmembrane spans lie at 3 to 23 (VAVF…LFMF), 32 to 52 (VIFL…SSLV), 70 to 90 (GLLI…RYGY), 118 to 138 (AYVS…VNIL), 161 to 181 (AFMT…FFEA), 187 to 207 (WWAL…TFVN), and 214 to 234 (LIPT…CAGG).

Belongs to the APH-1 family. Component of the gamma-secretase complex, a complex composed of a presenilin homodimer (PSEN1 or PSEN2), nicastrin (NCSTN), APH1 and PEN2.

The protein localises to the membrane. Its function is as follows. Essential subunit of the gamma-secretase complex, an endoprotease complex that catalyzes the intramembrane cleavage of integral proteins such as Notch receptors. It may represent a stabilizing cofactor for the presenilin homodimer that promotes the formation of a stable complex. The polypeptide is Gamma-secretase subunit Aph-1b (aph1b) (Danio rerio (Zebrafish)).